Reading from the N-terminus, the 852-residue chain is Metastasis-associated in colon cancer protein 1 (852 aa).

Serine 19 bears the Phosphoserine mark. The region spanning 212 to 349 is the ZU5 domain; sequence VTIACKVNHQ…LSQVMYLVVA (138 aa). Positions 549–619 constitute an SH3 domain; sequence NFSNYGVTLK…HCKNVKVISK (71 aa).

As to quaternary structure, interacts with FASLG. As to expression, preferentially expressed in metastasizing tumors.

Its subcellular location is the cytoplasm. It is found in the nucleus. Its function is as follows. Acts as a transcription activator for MET and as a key regulator of HGF-MET signaling. Promotes cell motility, proliferation and hepatocyte growth factor (HGF)-dependent scattering in vitro and tumor growth and metastasis in vivo. The protein is Metastasis-associated in colon cancer protein 1 (MACC1) of Homo sapiens (Human).